Here is a 107-residue protein sequence, read N- to C-terminus: Thioredoxin (107 aa).

Residues 2–107 (VVHIENLNAF…TLKQKINDHK (106 aa)) enclose the Thioredoxin domain. Active-site nucleophile residues include cysteine 32 and cysteine 35. A disulfide bridge links cysteine 32 with cysteine 35. S-nitrosocysteine is present on residues cysteine 71 and cysteine 75.

Belongs to the thioredoxin family. May be nitrosylated on several cysteine residues, depending on the oxidation state. Nitrosylated Cys-75 may serve as donor for nitrosylation of target proteins.

Its subcellular location is the nucleus. The protein resides in the cytoplasm. It localises to the secreted. Participates in various redox reactions through the reversible oxidation of its active center dithiol to a disulfide and catalyzes dithiol-disulfide exchange reactions. Plays a role in the reversible S-nitrosylation of cysteine residues in target proteins, and thereby contributes to the response to intracellular nitric oxide. Nitrosylates the active site Cys of CASP3 in response to nitric oxide (NO), and thereby inhibits caspase-3 activity. Induces the FOS/JUN AP-1 DNA binding activity in ionizing radiation (IR) cells through its oxidation/reduction status and stimulates AP-1 transcriptional activity. The protein is Thioredoxin (txn) of Ictalurus punctatus (Channel catfish).